A 32-amino-acid chain; its full sequence is Protein YthB (32 aa).

The polypeptide is Protein YthB (Escherichia coli (strain K12)).